Consider the following 230-residue polypeptide: ATP phosphoribosyltransferase (230 aa).

The protein belongs to the ATP phosphoribosyltransferase family. Short subfamily. As to quaternary structure, heteromultimer composed of HisG and HisZ subunits.

The protein localises to the cytoplasm. The enzyme catalyses 1-(5-phospho-beta-D-ribosyl)-ATP + diphosphate = 5-phospho-alpha-D-ribose 1-diphosphate + ATP. The protein operates within amino-acid biosynthesis; L-histidine biosynthesis; L-histidine from 5-phospho-alpha-D-ribose 1-diphosphate: step 1/9. In terms of biological role, catalyzes the condensation of ATP and 5-phosphoribose 1-diphosphate to form N'-(5'-phosphoribosyl)-ATP (PR-ATP). Has a crucial role in the pathway because the rate of histidine biosynthesis seems to be controlled primarily by regulation of HisG enzymatic activity. This is ATP phosphoribosyltransferase (hisG) from Chelativorans sp. (strain BNC1).